The following is a 1193-amino-acid chain: Pyruvate carboxylase (1193 aa).

A Biotin carboxylation domain is found at 41 to 493; sequence QFQKILVANR…WTTFIDDTPE (453 aa). 3 residues coordinate ATP: lysine 159, glutamate 243, and histidine 278. Positions 163–360 constitute an ATP-grasp domain; it reads RQLAIRCNVP…IVAAQIQIAA (198 aa). Residue arginine 335 is part of the active site. One can recognise a Pyruvate carboxyltransferase domain in the interval 579–847; that stretch reads CLIMDTTWRD…DPGLNSAHVR (269 aa). Residues 587 to 591 and arginine 660 contribute to the substrate site; that span reads RDAHQ. An a divalent metal cation-binding site is contributed by aspartate 588. The a divalent metal cation site is built by lysine 756, histidine 786, and histidine 788. Lysine 756 bears the N6-carboxylysine mark. A substrate-binding site is contributed by threonine 921. A Biotinyl-binding domain is found at 1116–1191; sequence KADVGDSSQV…DGQDLVCKIT (76 aa). Residue lysine 1157 is modified to N6-biotinyllysine.

The cofactor is biotin. Zn(2+) serves as cofactor.

Its subcellular location is the cytoplasm. The enzyme catalyses hydrogencarbonate + pyruvate + ATP = oxaloacetate + ADP + phosphate + H(+). It participates in carbohydrate biosynthesis; gluconeogenesis. Functionally, pyruvate carboxylase catalyzes a 2-step reaction, involving the ATP-dependent carboxylation of the covalently attached biotin in the first step and the transfer of the carboxyl group to pyruvate in the second. This chain is Pyruvate carboxylase (pyc), found in Aspergillus terreus.